A 349-amino-acid polypeptide reads, in one-letter code: Histidinol-phosphate aminotransferase (349 aa).

Residue lysine 210 is modified to N6-(pyridoxal phosphate)lysine.

It belongs to the class-II pyridoxal-phosphate-dependent aminotransferase family. Histidinol-phosphate aminotransferase subfamily. As to quaternary structure, homodimer. The cofactor is pyridoxal 5'-phosphate.

It catalyses the reaction L-histidinol phosphate + 2-oxoglutarate = 3-(imidazol-4-yl)-2-oxopropyl phosphate + L-glutamate. It functions in the pathway amino-acid biosynthesis; L-histidine biosynthesis; L-histidine from 5-phospho-alpha-D-ribose 1-diphosphate: step 7/9. The sequence is that of Histidinol-phosphate aminotransferase from Flavobacterium johnsoniae (strain ATCC 17061 / DSM 2064 / JCM 8514 / BCRC 14874 / CCUG 350202 / NBRC 14942 / NCIMB 11054 / UW101) (Cytophaga johnsonae).